Reading from the N-terminus, the 165-residue chain is MATNFFIQPITQEAEAYYPPSVITNKRKDLGVDVYCCSDLVLQPGLNIVRLHIKVACEHMGKKCGFKIMARSSMCTHERLLILANGIGLIDPGYVGELMLKIINLGDTPVQIWAKECLVQLVAQGDHVPDHINILKRNQIFPLFAPTPRGEGRFGSTGEAGIMRT.

It belongs to the dUTPase family. As to quaternary structure, homotrimer. Requires Mg(2+) as cofactor.

The protein resides in the host cytoplasm. It localises to the virion. The enzyme catalyses dUTP + H2O = dUMP + diphosphate + H(+). Its function is as follows. The viral dUTPase may play a role in lowering the dUTP concentration in natural infections to minimize misincorporation of deoxyuridine into the viral DNA and ensure the fidelity of genome replication. This Ornithodoros (relapsing fever ticks) protein is Deoxyuridine 5'-triphosphate nucleotidohydrolase.